Consider the following 178-residue polypeptide: Fimbrial adapter PapK (178 aa).

The signal sequence occupies residues 1–21 (MIKSTGALLLFAALSAGQAIA).

It is found in the secreted. The protein resides in the fimbrium. Its function is as follows. Adapter that links the pilus rod to the base of the tip fibrillum. Regulates the length of the tip fibrillum and joins it to the pilus rod. Pili are polar filaments radiating from the surface of the bacterium to a length of 0.5-1.5 micrometers and numbering 100-300 per cell, and enable bacteria to colonize the epithelium of specific host organs. The chain is Fimbrial adapter PapK (papK) from Escherichia coli O6:H1 (strain CFT073 / ATCC 700928 / UPEC).